Consider the following 688-residue polypeptide: Mitochondrial potassium channel ATP-binding subunit (688 aa).

Residues 1–31 (MLFHFLQAGLRQCRPPARLVGLETGLSGARG) constitute a mitochondrion transit peptide. Helical transmembrane passes span 115–135 (PQLI…LLNI), 168–188 (LKLL…IVLL), 268–288 (GLLL…GSFL), and 342–362 (VLGV…NCIV). Residues 121 to 409 (LTAVLLAFGA…MSVLFGQVVR (289 aa)) form the ABC transmembrane type-1 domain. The ABC transporter domain maps to 442–679 (IHFKDVSFSY…GGLYADLIRR (238 aa)). 477–484 (GQSGGGKS) is a binding site for ATP.

The protein belongs to the ABC transporter superfamily. ABCB family. Multidrug resistance exporter (TC 3.A.1.201) subfamily. Component of the mitochondrial potassium channel (mitoK(ATP)).

It localises to the mitochondrion inner membrane. In terms of biological role, ATP-binding subunit of the mitochondrial ATP-gated potassium channel (mitoK(ATP)). Together with pore-forming subunit CCDC51/MITOK of the mitoK(ATP) channel, mediates ATP-dependent potassium currents across the mitochondrial inner membrane. An increase in ATP intracellular levels closes the channel, inhibiting K(+) transport, whereas a decrease in ATP levels enhances K(+) uptake in the mitochondrial matrix. Plays a role in mitochondrial iron transport. Required for maintenance of normal cardiac function, possibly by influencing mitochondrial iron export and regulating the maturation of cytosolic iron sulfur cluster-containing enzymes. The protein is Mitochondrial potassium channel ATP-binding subunit of Xenopus tropicalis (Western clawed frog).